A 166-amino-acid chain; its full sequence is Phospholipase A2 inhibitor B1 (166 aa).

The signal sequence occupies residues M1–G19. Residues L46–E161 enclose the C-type lectin domain. Intrachain disulfides connect C83/C160 and C138/C152. N-linked (GlcNAc...) asparagine glycosylation is present at N122.

It belongs to the alpha-type phospholipase A2 inhibitor family. As to quaternary structure, homotrimer; non-covalently linked. As to expression, expressed by the liver.

The protein localises to the secreted. Its function is as follows. This phospholipase A2 inhibitor binds directly phospholipase A2 in the presence or absence of calcium. In Crotalus durissus terrificus (South American rattlesnake), this protein is Phospholipase A2 inhibitor B1.